A 291-amino-acid polypeptide reads, in one-letter code: Oligopeptide transport system permease protein OppC (291 aa).

A run of 6 helical transmembrane segments spans residues 22-42, 85-105, 116-136, 142-162, 209-229, and 247-267; these read VASLAALLLLFVSAYALPPLL, MLIGVCVAVISTGIAATVGAI, TLMWVVDLLLVVPSFILIAIV, NSANIMFLVLLLAGFGWMISS, ALNVAAAILAETGLSFLGFGI, and ATAFPWVFLFPASILVLILVC. The region spanning 81–272 is the ABC transmembrane type-1 domain; that stretch reads MQKSMLIGVC…LILVCANLTG (192 aa).

This sequence belongs to the binding-protein-dependent transport system permease family. OppBC subfamily. As to quaternary structure, the complex is composed of an ATP-binding protein (OppD), two transmembrane proteins (OppB and OppC) and a solute-binding protein (OppA).

It is found in the cell inner membrane. In terms of biological role, part of the ABC transporter complex OppABCD involved in the uptake of oligopeptides. Responsible for the translocation of the substrate across the membrane. The sequence is that of Oligopeptide transport system permease protein OppC from Mycobacterium bovis (strain ATCC BAA-935 / AF2122/97).